Reading from the N-terminus, the 348-residue chain is Probable dual-specificity RNA methyltransferase RlmN (348 aa).

The Proton acceptor role is filled by Glu-93. A Radical SAM core domain is found at 99 to 333 (TEKRLTACLS…VSLRKSRGSD (235 aa)). A disulfide bridge links Cys-106 with Cys-338. 3 residues coordinate [4Fe-4S] cluster: Cys-113, Cys-117, and Cys-120. S-adenosyl-L-methionine-binding positions include 160–161 (GE), Ser-190, 219–221 (SLH), and Asn-295. Catalysis depends on Cys-338, which acts as the S-methylcysteine intermediate.

It belongs to the radical SAM superfamily. RlmN family. The cofactor is [4Fe-4S] cluster.

Its subcellular location is the cytoplasm. It carries out the reaction adenosine(2503) in 23S rRNA + 2 reduced [2Fe-2S]-[ferredoxin] + 2 S-adenosyl-L-methionine = 2-methyladenosine(2503) in 23S rRNA + 5'-deoxyadenosine + L-methionine + 2 oxidized [2Fe-2S]-[ferredoxin] + S-adenosyl-L-homocysteine. It catalyses the reaction adenosine(37) in tRNA + 2 reduced [2Fe-2S]-[ferredoxin] + 2 S-adenosyl-L-methionine = 2-methyladenosine(37) in tRNA + 5'-deoxyadenosine + L-methionine + 2 oxidized [2Fe-2S]-[ferredoxin] + S-adenosyl-L-homocysteine. Functionally, specifically methylates position 2 of adenine 2503 in 23S rRNA and position 2 of adenine 37 in tRNAs. This is Probable dual-specificity RNA methyltransferase RlmN from Prochlorococcus marinus (strain MIT 9515).